A 677-amino-acid polypeptide reads, in one-letter code: DNA ligase (677 aa).

NAD(+) is bound by residues Asp35–Asp39, Ser84–Leu85, and Glu115. Lys117 acts as the N6-AMP-lysine intermediate in catalysis. NAD(+)-binding residues include Arg138, Glu177, Lys296, and Lys320. Zn(2+) is bound by residues Cys414, Cys417, Cys432, and Cys437. Positions Asn599 to Glu677 constitute a BRCT domain.

This sequence belongs to the NAD-dependent DNA ligase family. LigA subfamily. It depends on Mg(2+) as a cofactor. Mn(2+) is required as a cofactor.

It carries out the reaction NAD(+) + (deoxyribonucleotide)n-3'-hydroxyl + 5'-phospho-(deoxyribonucleotide)m = (deoxyribonucleotide)n+m + AMP + beta-nicotinamide D-nucleotide.. In terms of biological role, DNA ligase that catalyzes the formation of phosphodiester linkages between 5'-phosphoryl and 3'-hydroxyl groups in double-stranded DNA using NAD as a coenzyme and as the energy source for the reaction. It is essential for DNA replication and repair of damaged DNA. This Nostoc sp. (strain PCC 7120 / SAG 25.82 / UTEX 2576) protein is DNA ligase.